A 370-amino-acid chain; its full sequence is DNA replication and repair protein RecF (370 aa).

An ATP-binding site is contributed by 30–37 (GENAQGKT).

This sequence belongs to the RecF family.

Its subcellular location is the cytoplasm. The RecF protein is involved in DNA metabolism; it is required for DNA replication and normal SOS inducibility. RecF binds preferentially to single-stranded, linear DNA. It also seems to bind ATP. The protein is DNA replication and repair protein RecF of Listeria innocua serovar 6a (strain ATCC BAA-680 / CLIP 11262).